Consider the following 371-residue polypeptide: Vasopressin V2 receptor (371 aa).

Residues 1 to 30 form a disordered region; sequence MLMASTTSAVPGHPSLPSLPSNSSQERPLD. Residues 1–38 are Extracellular-facing; it reads MLMASTTSAVPGHPSLPSLPSNSSQERPLDTRDPLLAR. The segment covering 15–24 has biased composition (low complexity); the sequence is SLPSLPSNSS. N22 carries N-linked (GlcNAc...) asparagine glycosylation. Residues 39–63 traverse the membrane as a helical segment; sequence AELALLSIVFVAVALSNGLVLAALA. Residues 64-77 lie on the Cytoplasmic side of the membrane; it reads RRGRRGHWAPIHVF. The chain crosses the membrane as a helical span at residues 78–98; it reads IGHLCLADLAVALFQVLPQLA. Over 99–113 the chain is Extracellular; the sequence is WKATDRFRGPDALCR. Residues 114–135 form a helical membrane-spanning segment; it reads AVKYLQMVGMYASSYMILAMTL. The Cytoplasmic segment spans residues 136–159; that stretch reads DRHRAICRPMLAYRHGSGAHWNRP. A helical membrane pass occupies residues 160–180; sequence VLVAWAFSLLLSLPQLFIFAQ. Over 181-200 the chain is Extracellular; it reads RNVEGGSGVTDCWACFAEPW. Residues 201–220 form a helical membrane-spanning segment; that stretch reads GRRTYVTWIALMVFVAPTLG. The Cytoplasmic portion of the chain corresponds to 221–271; it reads IAACQVLIFREIHASLVPGPSERPGGRRRGRRTGSPGEGAHVSAAVAKTVR. The tract at residues 240–259 is disordered; that stretch reads PSERPGGRRRGRRTGSPGEG. A helical transmembrane segment spans residues 272 to 293; the sequence is MTLVIVVVYVLCWAPFFLVQLW. Residues 294–308 are Extracellular-facing; the sequence is AAWDPEAPLEGAPFV. Residues 309-328 traverse the membrane as a helical segment; sequence LLMLLASLNSCTNPWIYASF. The Cytoplasmic segment spans residues 329-371; the sequence is SSSVSSELRSLLCCARGRTPPSLGPQDESCTTASSSLAKDTSS. Residues C341 and C342 are each lipidated (S-palmitoyl cysteine). The interval 349–371 is disordered; it reads PSLGPQDESCTTASSSLAKDTSS. The span at 356–371 shows a compositional bias: polar residues; it reads ESCTTASSSLAKDTSS.

The protein belongs to the G-protein coupled receptor 1 family. Vasopressin/oxytocin receptor subfamily. Interacts with ARRDC4. Identified in a complex containing at least ARRDC4, V2R and HGS. Interacts with TMEM147. Kidney.

The protein resides in the cell membrane. Receptor for arginine vasopressin. The activity of this receptor is mediated by G proteins which activate adenylate cyclase. Involved in renal water reabsorption. This Homo sapiens (Human) protein is Vasopressin V2 receptor (AVPR2).